Consider the following 136-residue polypeptide: Ribonuclease P protein component (136 aa).

The interval 116–136 (RPQRAAAKGSAGTTQKGTPRA) is disordered. Over residues 126–136 (AGTTQKGTPRA) the composition is skewed to polar residues.

It belongs to the RnpA family. In terms of assembly, consists of a catalytic RNA component (M1 or rnpB) and a protein subunit.

The catalysed reaction is Endonucleolytic cleavage of RNA, removing 5'-extranucleotides from tRNA precursor.. RNaseP catalyzes the removal of the 5'-leader sequence from pre-tRNA to produce the mature 5'-terminus. It can also cleave other RNA substrates such as 4.5S RNA. The protein component plays an auxiliary but essential role in vivo by binding to the 5'-leader sequence and broadening the substrate specificity of the ribozyme. This chain is Ribonuclease P protein component, found in Pseudarthrobacter chlorophenolicus (strain ATCC 700700 / DSM 12829 / CIP 107037 / JCM 12360 / KCTC 9906 / NCIMB 13794 / A6) (Arthrobacter chlorophenolicus).